Here is a 190-residue protein sequence, read N- to C-terminus: Putative histone H1.6 (190 aa).

Residues methionine 1–valine 29 form a disordered region. N-acetylserine is present on serine 2. Residues threonine 9 to valine 29 are compositionally biased toward low complexity. The 77-residue stretch at alanine 34–glutamate 110 folds into the H15 domain. Positions lysine 141–alanine 190 are disordered. The span at lysine 148–lysine 183 shows a compositional bias: basic residues.

It belongs to the histone H1/H5 family.

The protein localises to the nucleus. It localises to the chromosome. Its function is as follows. Histones H1 are necessary for the condensation of nucleosome chains into higher-order structures. The polypeptide is Putative histone H1.6 (hil-6) (Caenorhabditis elegans).